The chain runs to 322 residues: Acetyl-coenzyme A carboxylase carboxyl transferase subunit alpha (322 aa).

A CoA carboxyltransferase C-terminal domain is found at 39–293 (RLASKSQQLT…KRALAESLRQ (255 aa)).

Belongs to the AccA family. Acetyl-CoA carboxylase is a heterohexamer composed of biotin carboxyl carrier protein (AccB), biotin carboxylase (AccC) and two subunits each of ACCase subunit alpha (AccA) and ACCase subunit beta (AccD).

The protein localises to the cytoplasm. The catalysed reaction is N(6)-carboxybiotinyl-L-lysyl-[protein] + acetyl-CoA = N(6)-biotinyl-L-lysyl-[protein] + malonyl-CoA. Its pathway is lipid metabolism; malonyl-CoA biosynthesis; malonyl-CoA from acetyl-CoA: step 1/1. Component of the acetyl coenzyme A carboxylase (ACC) complex. First, biotin carboxylase catalyzes the carboxylation of biotin on its carrier protein (BCCP) and then the CO(2) group is transferred by the carboxyltransferase to acetyl-CoA to form malonyl-CoA. In Ralstonia pickettii (strain 12J), this protein is Acetyl-coenzyme A carboxylase carboxyl transferase subunit alpha.